Here is a 439-residue protein sequence, read N- to C-terminus: MDRISHLADEILSKILSFLGTKDVMQTMLLSKRFKSQWLLVPKLEFDDSTHLPETWGYQEPDYGNFRRFVDRSLLSREGRVLQTLFLKLGRQCSYDDIAIWVGIAVKRGLMELKLKYTDSYYPKRSSLPRSLYTCETLVVLKLKKGYLDVPDLVCLRSLKTLSLRDMNYSNASCLLRLLASCPVLEELFIQQGYYDSCALSFKIILPCLKKLSYLPKRKKKYSGIDRSEVSGGISGLVLDAPSLKYLHIVDRSGLFSVSEIININAVVKATLEVNASRPEKLLYSLVSVEHIRLCLSATEVVYPVGLGSSFHKLKRLEVCTCKSEWLDLFIHLLEDSPSLQDIKINQCHPVTNPRPQWNQPGSVPRCLSSSLETLEWVEYGGTHEEKELSTYLFKTAVCFKKASFTAKWSGGDANKKLQMLQELALSPRVSPTCELVFN.

Positions 1–61 (MDRISHLADE…LPETWGYQEP (61 aa)) constitute an F-box domain. The FBD domain maps to 358 to 406 (WNQPGSVPRCLSSSLETLEWVEYGGTHEEKELSTYLFKTAVCFKKASFT).

This is FBD-associated F-box protein At5g56380 from Arabidopsis thaliana (Mouse-ear cress).